A 271-amino-acid polypeptide reads, in one-letter code: Vacuolar arginine/histidine antiporter stm1 (271 aa).

The region spanning Leu14 to Leu80 is the PQ-loop 1 domain. Transmembrane regions (helical) follow at residues Leu17 to Leu37, Ile49 to Ile69, and Val77 to Tyr97. The residue at position 119 (Ser119) is a Phosphoserine. 4 consecutive transmembrane segments (helical) span residues Phe144–Ser164, Pro178–Ile198, Ile211–Phe231, and Pro245–Ile265. Residues Ser185 to Tyr239 enclose the PQ-loop 2 domain.

The protein belongs to the laat-1 family.

Its subcellular location is the vacuole membrane. It catalyses the reaction L-histidine(out) + L-arginine(in) = L-histidine(in) + L-arginine(out). Functionally, amino acid transporter that moves basic amino acids across the vacuolar membrane. Appears to function as an arginine/histidine antiporter. The chain is Vacuolar arginine/histidine antiporter stm1 (stm1) from Schizosaccharomyces pombe (strain 972 / ATCC 24843) (Fission yeast).